A 485-amino-acid polypeptide reads, in one-letter code: NADH-quinone oxidoreductase subunit N (485 aa).

14 consecutive transmembrane segments (helical) span residues 8–28 (LIAL…MLCI), 35–55 (FINS…LWFV), 75–95 (FYTG…YAWL), 105–125 (FYLL…ANHL), 127–147 (ALFL…GYAF), 159–179 (YTLL…LVYA), 203–223 (LLAG…LVPF), 235–255 (PVPV…AVVM), 271–291 (LVLA…ALSQ), 303–323 (IAHL…TLAL), 326–346 (VGVY…VVSL), 371–393 (LLSS…LGFI), 406–426 (HLGW…FYYL), and 449–469 (ALTA…LLGL).

It belongs to the complex I subunit 2 family. As to quaternary structure, NDH-1 is composed of 13 different subunits. Subunits NuoA, H, J, K, L, M, N constitute the membrane sector of the complex.

It localises to the cell inner membrane. It catalyses the reaction a quinone + NADH + 5 H(+)(in) = a quinol + NAD(+) + 4 H(+)(out). Its function is as follows. NDH-1 shuttles electrons from NADH, via FMN and iron-sulfur (Fe-S) centers, to quinones in the respiratory chain. The immediate electron acceptor for the enzyme in this species is believed to be ubiquinone. Couples the redox reaction to proton translocation (for every two electrons transferred, four hydrogen ions are translocated across the cytoplasmic membrane), and thus conserves the redox energy in a proton gradient. The polypeptide is NADH-quinone oxidoreductase subunit N (Sodalis glossinidius (strain morsitans)).